A 294-amino-acid polypeptide reads, in one-letter code: MLGDLFTKPKKRKYATIPSDGTKADVPEGIMTKCPECKKIMYTKELQKNLMVCNYCGFHHPIGATARIDMLVDEGSFEELDANLTTANPLGFENYMDRIEKDKQKSGLNEAIVTGHATIDGNPLVIAVMDSRFRMASMGSVVGEKILRGVEEADKTNKPFVIFTASGGARMQEGMLSLMQMAKTSAAFKRFSNHGGLVITVMTHPTTGGVSASFASLGDYNFAEPGALIGFAGRRVIEQTVREELPEDFQTAEFLLKHGQLDDCISRLDLKNKLSFILKIHVKTPEAGGESDGE.

The 265-residue stretch at I30–E294 folds into the CoA carboxyltransferase N-terminal domain. Residues C34, C37, C53, and C56 each coordinate Zn(2+). A C4-type zinc finger spans residues C34 to C56.

The protein belongs to the AccD/PCCB family. In terms of assembly, acetyl-CoA carboxylase is a heterohexamer composed of biotin carboxyl carrier protein (AccB), biotin carboxylase (AccC) and two subunits each of ACCase subunit alpha (AccA) and ACCase subunit beta (AccD). The cofactor is Zn(2+).

It is found in the cytoplasm. It catalyses the reaction N(6)-carboxybiotinyl-L-lysyl-[protein] + acetyl-CoA = N(6)-biotinyl-L-lysyl-[protein] + malonyl-CoA. It functions in the pathway lipid metabolism; malonyl-CoA biosynthesis; malonyl-CoA from acetyl-CoA: step 1/1. Functionally, component of the acetyl coenzyme A carboxylase (ACC) complex. Biotin carboxylase (BC) catalyzes the carboxylation of biotin on its carrier protein (BCCP) and then the CO(2) group is transferred by the transcarboxylase to acetyl-CoA to form malonyl-CoA. This chain is Acetyl-coenzyme A carboxylase carboxyl transferase subunit beta, found in Listeria innocua serovar 6a (strain ATCC BAA-680 / CLIP 11262).